A 175-amino-acid chain; its full sequence is ATP synthase subunit delta (175 aa).

The protein belongs to the ATPase delta chain family. F-type ATPases have 2 components, F(1) - the catalytic core - and F(0) - the membrane proton channel. F(1) has five subunits: alpha(3), beta(3), gamma(1), delta(1), epsilon(1). F(0) has three main subunits: a(1), b(2) and c(10-14). The alpha and beta chains form an alternating ring which encloses part of the gamma chain. F(1) is attached to F(0) by a central stalk formed by the gamma and epsilon chains, while a peripheral stalk is formed by the delta and b chains.

The protein resides in the cell membrane. Its function is as follows. F(1)F(0) ATP synthase produces ATP from ADP in the presence of a proton or sodium gradient. F-type ATPases consist of two structural domains, F(1) containing the extramembraneous catalytic core and F(0) containing the membrane proton channel, linked together by a central stalk and a peripheral stalk. During catalysis, ATP synthesis in the catalytic domain of F(1) is coupled via a rotary mechanism of the central stalk subunits to proton translocation. Functionally, this protein is part of the stalk that links CF(0) to CF(1). It either transmits conformational changes from CF(0) to CF(1) or is implicated in proton conduction. The sequence is that of ATP synthase subunit delta from Ruminiclostridium cellulolyticum (strain ATCC 35319 / DSM 5812 / JCM 6584 / H10) (Clostridium cellulolyticum).